Consider the following 217-residue polypeptide: Large ribosomal subunit protein bL21m (217 aa).

Low complexity predominate over residues 61-81 (PPKVTTATTPEAPAAVPTSTP). The interval 61–87 (PPKVTTATTPEAPAAVPTSTPFSQQPP) is disordered.

Belongs to the bacterial ribosomal protein bL21 family. In terms of assembly, component of the mitochondrial large ribosomal subunit (mt-LSU). Mature N.crassa 74S mitochondrial ribosomes consist of a small (37S) and a large (54S) subunit. The 37S small subunit contains a 16S ribosomal RNA (16S mt-rRNA) and 32 different proteins. The 54S large subunit contains a 23S rRNA (23S mt-rRNA) and 42 different proteins.

It is found in the mitochondrion. Its function is as follows. Component of the mitochondrial ribosome (mitoribosome), a dedicated translation machinery responsible for the synthesis of mitochondrial genome-encoded proteins, including at least some of the essential transmembrane subunits of the mitochondrial respiratory chain. The mitoribosomes are attached to the mitochondrial inner membrane and translation products are cotranslationally integrated into the membrane. The protein is Large ribosomal subunit protein bL21m (mrpl49) of Neurospora crassa (strain ATCC 24698 / 74-OR23-1A / CBS 708.71 / DSM 1257 / FGSC 987).